We begin with the raw amino-acid sequence, 411 residues long: Glutamyl-tRNA reductase (411 aa).

Substrate contacts are provided by residues 49-52 (TCNR), Ser-99, 104-106 (ENE), and Gln-110. The active-site Nucleophile is the Cys-50. 179–184 (GAGEAG) serves as a coordination point for NADP(+).

This sequence belongs to the glutamyl-tRNA reductase family. In terms of assembly, homodimer.

It carries out the reaction (S)-4-amino-5-oxopentanoate + tRNA(Glu) + NADP(+) = L-glutamyl-tRNA(Glu) + NADPH + H(+). Its pathway is porphyrin-containing compound metabolism; protoporphyrin-IX biosynthesis; 5-aminolevulinate from L-glutamyl-tRNA(Glu): step 1/2. Functionally, catalyzes the NADPH-dependent reduction of glutamyl-tRNA(Glu) to glutamate 1-semialdehyde (GSA). The chain is Glutamyl-tRNA reductase from Hyperthermus butylicus (strain DSM 5456 / JCM 9403 / PLM1-5).